The chain runs to 1149 residues: Protogenin A (1149 aa).

The first 23 residues, 1–23, serve as a signal peptide directing secretion; that stretch reads MASFKRDLYLFLAVFLSISGVWS. The Extracellular segment spans residues 24 to 932; sequence FSELFFIKEP…GFYHLDQRSM (909 aa). 4 consecutive Ig-like domains span residues 27-117, 122-209, 222-309, and 314-399; these read LFFI…ARLT, STFT…ATLT, PRII…ANIT, and PSLV…RLIV. 2 cysteine pairs are disulfide-bonded: cysteine 48–cysteine 100 and cysteine 143–cysteine 192. A glycan (N-linked (GlcNAc...) asparagine) is linked at asparagine 78. An N-linked (GlcNAc...) asparagine glycan is attached at asparagine 230. A disulfide bridge connects residues cysteine 243 and cysteine 291. 2 N-linked (GlcNAc...) asparagine glycosylation sites follow: asparagine 300 and asparagine 307. Cysteine 335 and cysteine 382 form a disulfide bridge. Fibronectin type-III domains lie at 408–502, 504–600, 605–704, 711–804, and 809–905; these read APRN…TLED, PLRA…TPKA, VPLA…VRDR, PPHH…TLPE, and APVG…IHTD. Residues asparagine 460 and asparagine 475 are each glycosylated (N-linked (GlcNAc...) asparagine). Asparagine 617 carries N-linked (GlcNAc...) asparagine glycosylation. The interval 646–666 is disordered; that stretch reads GQSEAAQAQIPPHHRQHTIGG. N-linked (GlcNAc...) asparagine glycans are attached at residues asparagine 720, asparagine 741, and asparagine 753. A helical membrane pass occupies residues 933–953; that stretch reads AGIAVGVCIALTCIIICILIL. Over 954–1149 the chain is Cytoplasmic; it reads ACRSKTRKSC…EQEMTDLHPV (196 aa). Positions 1060–1149 are disordered; that stretch reads YTETSPENPP…EQEMTDLHPV (90 aa). A compositionally biased stretch (polar residues) spans 1061–1073; that stretch reads TETSPENPPTTLQ. Residues 1084 to 1106 are compositionally biased toward basic and acidic residues; that stretch reads EGSHSSEGSHETSDSGRYSHDDT.

Belongs to the immunoglobulin superfamily. DCC family. As to expression, expression begins in the posterior region of the embryo and this posterior restriction persists at the 4 s stage. At early somite stages, expressed along the neural tube with lower levels in the lateral and paraxial mesoderm. Expression decreases caudally and rostrally becomes restricted to the ventral part of the brain. Widespread in the spinal cord at 30 hours post-fertilization (hpf) and is also expressed in the lens from this time. At 40 hpf, expression is restricted to the lens.

It is found in the membrane. In terms of biological role, may play a role in anteroposterior axis elongation. The polypeptide is Protogenin A (Danio rerio (Zebrafish)).